The chain runs to 412 residues: Putative disintegrin and metalloproteinase domain-containing protein 5 (412 aa).

One can recognise a Disintegrin domain in the interval 111-199 (EKYADTNILL…YCLPDTYVRD (89 aa)). The 35-residue stretch at 351-385 (NLKLCDASNHCDRHGVCNNFNHCHCEKGYNPPYCQ) folds into the EGF-like domain.

In terms of assembly, interacts with TEX101. As to expression, highly expressed in testis.

Its function is as follows. This is a non catalytic metalloprotease-like protein. The sequence is that of Putative disintegrin and metalloproteinase domain-containing protein 5 (ADAM5) from Homo sapiens (Human).